Reading from the N-terminus, the 227-residue chain is H-2 class II histocompatibility antigen, A-U alpha chain (227 aa).

The tract at residues 1-82 (DHVGSYGIVV…KRSNSTPATN (82 aa)) is alpha-1. Residues 1–189 (DHVGSYGIVV…IPAPMSELTE (189 aa)) are Extracellular-facing. The alpha-2 stretch occupies residues 83–176 (EAPQATVFPK…GLEEPVLKHW (94 aa)). Residues 85-177 (PQATVFPKSP…LEEPVLKHWE (93 aa)) form the Ig-like C1-type domain. Cys105 and Cys161 form a disulfide bridge. An N-linked (GlcNAc...) asparagine glycan is attached at Asn116. The interval 177-189 (EPEIPAPMSELTE) is connecting peptide. The chain crosses the membrane as a helical span at residues 190-215 (TVVCALGLSVGLVGIVVGTIFIIQGL). Over 216–227 (RSGGTSRHPGPL) the chain is Cytoplasmic.

Belongs to the MHC class II family.

It is found in the membrane. This is H-2 class II histocompatibility antigen, A-U alpha chain (H2-Aa) from Mus musculus (Mouse).